The primary structure comprises 88 residues: Small ribosomal subunit protein bS20 (88 aa).

Residues 1 to 27 (MANTASAKKMTRKIAKRTAINRSRRSR) are disordered.

The protein belongs to the bacterial ribosomal protein bS20 family.

Binds directly to 16S ribosomal RNA. This chain is Small ribosomal subunit protein bS20, found in Methylobacterium radiotolerans (strain ATCC 27329 / DSM 1819 / JCM 2831 / NBRC 15690 / NCIMB 10815 / 0-1).